The following is a 164-amino-acid chain: uncharacterized protein (164 aa).

The disordered stretch occupies residues 1-77; that stretch reads MGQKKTMGTE…PCSIRDAPFH (77 aa).

This is an uncharacterized protein from Homo sapiens (Human).